A 128-amino-acid chain; its full sequence is Iron-sulfur cluster insertion protein ErpA (128 aa).

Iron-sulfur cluster is bound by residues cysteine 56, cysteine 120, and cysteine 122.

It belongs to the HesB/IscA family. In terms of assembly, homodimer. Requires iron-sulfur cluster as cofactor.

Its function is as follows. Required for insertion of 4Fe-4S clusters for at least IspG. The protein is Iron-sulfur cluster insertion protein ErpA of Xanthomonas campestris pv. campestris (strain 8004).